The following is a 338-amino-acid chain: UPF0104 membrane protein MTH_1261 (338 aa).

The next 8 helical transmembrane spans lie at 6-26 (AILIVIGVVALAAMILIIGPG), 36-56 (DPVYVLMAVVLEFIILALFTL), 124-144 (LDTFPFIFLAVLTIIGIVLYF), 149-169 (WILAALIASVVIIVVAFFLAL), 231-251 (ISFLIWILEIIRVYLIFTAFG), 254-274 (ISLLVIAEVFILATLIGMIPL), 275-295 (LPGGLGAVDGIMIVFYSYAGV), and 310-330 (ISFWMISAMGVAAIPYFGSSV).

Belongs to the UPF0104 family.

The protein resides in the cell membrane. In Methanothermobacter thermautotrophicus (strain ATCC 29096 / DSM 1053 / JCM 10044 / NBRC 100330 / Delta H) (Methanobacterium thermoautotrophicum), this protein is UPF0104 membrane protein MTH_1261.